A 175-amino-acid chain; its full sequence is Thioredoxin M3, chloroplastic (175 aa).

A chloroplast-targeting transit peptide spans 1-59 (MAATATACPAPPPPRSLYRGVALAAPGRRRAGYGASSSAARRWPGCRRRWAAHRIRTVS). One can recognise a Thioredoxin domain in the interval 61–171 (AYSPRGAKTI…YVRAIEKSIS (111 aa)). Active-site nucleophile residues include C95 and C98. Cysteines 95 and 98 form a disulfide.

It belongs to the thioredoxin family. Plant M-type subfamily.

The protein resides in the plastid. The protein localises to the chloroplast. In terms of biological role, probable thiol-disulfide oxidoreductase that may be involved in the redox regulation of chloroplastic enzymes. This is Thioredoxin M3, chloroplastic from Oryza sativa subsp. japonica (Rice).